A 324-amino-acid polypeptide reads, in one-letter code: Cuticle collagen sqt-1 (324 aa).

Disordered stretches follow at residues 68–108 and 129–324; these read RRQY…TPNG and SGPK…YRNI. Residues 87–97 show a composition bias toward pro residues; it reads SAPPGQPPAVP. 3 triple-helical region regions span residues 127–153, 171–231, and 237–299; these read GPSG…PGVG, QGPV…KGRD, and GRPG…PGKD. Composition is skewed to low complexity over residues 129–156 and 177–201; these read SGPK…GADD and PGAL…PGRD. Basic and acidic residues predominate over residues 227 to 236; the sequence is EKGRDAEHPI.

It belongs to the cuticular collagen family. In terms of assembly, collagen polypeptide chains are complexed within the cuticle by disulfide bonds and other types of covalent cross-links.

Its function is as follows. Nematode cuticles are composed largely of collagen-like proteins. The cuticle functions both as an exoskeleton and as a barrier to protect the worm from its environment. This is a collagen critical for organismal morphogenesis. Mutations in sqt-1 can lengthen, shorten, or helically twist the entire animal. In Caenorhabditis elegans, this protein is Cuticle collagen sqt-1 (sqt-1).